The chain runs to 664 residues: UvrABC system protein B (664 aa).

Residues 25–412 form the Helicase ATP-binding domain; that stretch reads KGLVSGLTDQ…LQVVEQLVRP (388 aa). Residue 38-45 coordinates ATP; it reads GVTGSGKT. The Beta-hairpin motif lies at 91–114; that stretch reads YYDYYQPEAYVPQKDMYIEKDSDI. The Helicase C-terminal domain maps to 428–594; it reads QIDDLLEEVK…GIRKAIKDIN (167 aa). The UVR domain occupies 620 to 655; that stretch reads ARLIKELESQMKKAAKNLEFERAALIRDRVVELRAA.

Belongs to the UvrB family. In terms of assembly, forms a heterotetramer with UvrA during the search for lesions. Interacts with UvrC in an incision complex.

It is found in the cytoplasm. Its function is as follows. The UvrABC repair system catalyzes the recognition and processing of DNA lesions. A damage recognition complex composed of 2 UvrA and 2 UvrB subunits scans DNA for abnormalities. Upon binding of the UvrA(2)B(2) complex to a putative damaged site, the DNA wraps around one UvrB monomer. DNA wrap is dependent on ATP binding by UvrB and probably causes local melting of the DNA helix, facilitating insertion of UvrB beta-hairpin between the DNA strands. Then UvrB probes one DNA strand for the presence of a lesion. If a lesion is found the UvrA subunits dissociate and the UvrB-DNA preincision complex is formed. This complex is subsequently bound by UvrC and the second UvrB is released. If no lesion is found, the DNA wraps around the other UvrB subunit that will check the other stand for damage. This chain is UvrABC system protein B, found in Dehalococcoides mccartyi (strain CBDB1).